Consider the following 269-residue polypeptide: S-adenosylmethionine decarboxylase proenzyme (269 aa).

Ser-118 (schiff-base intermediate with substrate; via pyruvic acid) is an active-site residue. Ser-118 is modified (pyruvic acid (Ser); by autocatalysis). His-123 serves as the catalytic Proton acceptor; for processing activity. The active-site Proton donor; for catalytic activity is Cys-146.

This sequence belongs to the prokaryotic AdoMetDC family. Type 2 subfamily. In terms of assembly, heterooctamer of four alpha and four beta chains arranged as a tetramer of alpha/beta heterodimers. Pyruvate serves as cofactor. Post-translationally, is synthesized initially as an inactive proenzyme. Formation of the active enzyme involves a self-maturation process in which the active site pyruvoyl group is generated from an internal serine residue via an autocatalytic post-translational modification. Two non-identical subunits are generated from the proenzyme in this reaction, and the pyruvate is formed at the N-terminus of the alpha chain, which is derived from the carboxyl end of the proenzyme. The post-translation cleavage follows an unusual pathway, termed non-hydrolytic serinolysis, in which the side chain hydroxyl group of the serine supplies its oxygen atom to form the C-terminus of the beta chain, while the remainder of the serine residue undergoes an oxidative deamination to produce ammonia and the pyruvoyl group blocking the N-terminus of the alpha chain.

The enzyme catalyses S-adenosyl-L-methionine + H(+) = S-adenosyl 3-(methylsulfanyl)propylamine + CO2. Its pathway is amine and polyamine biosynthesis; S-adenosylmethioninamine biosynthesis; S-adenosylmethioninamine from S-adenosyl-L-methionine: step 1/1. Functionally, catalyzes the decarboxylation of S-adenosylmethionine to S-adenosylmethioninamine (dcAdoMet), the propylamine donor required for the synthesis of the polyamines spermine and spermidine from the diamine putrescine. This Brevibacillus brevis (strain 47 / JCM 6285 / NBRC 100599) protein is S-adenosylmethionine decarboxylase proenzyme.